Here is a 531-residue protein sequence, read N- to C-terminus: UDP-glucuronosyltransferase 1A3 (531 aa).

The N-terminal stretch at 1-25 is a signal peptide; that stretch reads MGIQGFLQKLSGLLLLLCALPWAEG. N-linked (GlcNAc...) asparagine glycosylation is found at asparagine 116, asparagine 139, asparagine 293, and asparagine 431. A helical membrane pass occupies residues 489–505; it reads VIGFLLAIVLTVVFIVY.

It belongs to the UDP-glycosyltransferase family. As to quaternary structure, homodimers. Homooligomer. Interacts with UGT1A1, UGT1A4, UGT1A6, UGT1A7, UGT1A8, UGT1A9 and UGT1A10 to form heterodimers.

Its subcellular location is the endoplasmic reticulum membrane. The enzyme catalyses glucuronate acceptor + UDP-alpha-D-glucuronate = acceptor beta-D-glucuronoside + UDP + H(+). It carries out the reaction 17beta-estradiol + UDP-alpha-D-glucuronate = 17beta-estradiol 3-O-(beta-D-glucuronate) + UDP + H(+). The catalysed reaction is 17beta-estradiol + UDP-alpha-D-glucuronate = 17beta-estradiol 17-O-(beta-D-glucuronate) + UDP + H(+). It catalyses the reaction 17alpha-estradiol + UDP-alpha-D-glucuronate = 17alpha-estradiol 3-O-(beta-D-glucuronate) + UDP + H(+). The enzyme catalyses estrone + UDP-alpha-D-glucuronate = estrone 3-O-(beta-D-glucuronate) + UDP + H(+). It carries out the reaction chenodeoxycholate + UDP-alpha-D-glucuronate = chenodeoxycholoyl-24-O-(beta-D-glucuronate) + UDP. The catalysed reaction is deoxycholate + UDP-alpha-D-glucuronate = deoxycholoyl-24-O-(beta-D-glucuronate) + UDP. It catalyses the reaction lithocholate + UDP-alpha-D-glucuronate = lithocholoyl-24-O-(beta-D-glucuronate) + UDP. The enzyme catalyses hyodeoxycholate + UDP-alpha-D-glucuronate = hyodeoxycholoyl-24-O-(beta-D-glucuronate) + UDP. It carries out the reaction hyocholate + UDP-alpha-D-glucuronate = hyocholoyl-24-O-(beta-D-glucuronate) + UDP. The catalysed reaction is calcidiol + UDP-alpha-D-glucuronate = calcidiol 25-O-(beta-D-glucuronide) + UDP + H(+). It catalyses the reaction losartan + UDP-alpha-D-glucuronate = losartan-2-N-beta-D-glucuronide + UDP. The enzyme catalyses candesartan + UDP-alpha-D-glucuronate = candesartan-2-N-beta-D-glucuronide + UDP. It carries out the reaction zolasartan + UDP-alpha-D-glucuronate = zolarsartan-2-N-beta-D-glucuronide + UDP. The catalysed reaction is (E)-ferulate + UDP-alpha-D-glucuronate = (E)-4-O-(beta-D-glucuronosyl)-ferulate + UDP + H(+). It catalyses the reaction (E)-ferulate + UDP-alpha-D-glucuronate = (E)-ferulic acid beta-D-glucuronate ester + UDP. UDP-glucuronosyltransferase (UGT) that catalyzes phase II biotransformation reactions in which lipophilic substrates are conjugated with glucuronic acid to increase the metabolite's water solubility, thereby facilitating excretion into either the urine or bile. Essential for the elimination and detoxification of drugs, xenobiotics and endogenous compounds. Catalyzes the glucuronidation of endogenous estrogen hormones such as estradiol and estrone. Contributes to bile acid (BA) detoxification by catalyzing the glucuronidation of BA substrates, which are natural detergents for dietary lipids absorption. Involved in the glucuronidation of calcidiol, which is the major circulating form of vitamin D3, essential for the regulation of calcium and phosphate homeostasis. Involved in the glucuronidation of the phytochemical ferulic acid at the phenolic or the carboxylic acid group. Involved in the glucuronidation of the AGTR1 angiotensin receptor antagonists losartan, candesartan and zolarsartan, which can inhibit the effect of angiotensin II. This Rattus norvegicus (Rat) protein is UDP-glucuronosyltransferase 1A3.